We begin with the raw amino-acid sequence, 1136 residues long: Carbamoyl phosphate synthase large chain (1136 aa).

Positions 1 to 402 (MPKRTDIKSV…SLGKAMRSID (402 aa)) are carboxyphosphate synthetic domain. The ATP site is built by Arg129, Arg169, Gly175, Gly176, Glu208, Ile210, Glu215, Gly241, Val242, His243, Gln285, and Glu299. Positions 133–328 (KKVVKEAGAE…IAKIATKLAL (196 aa)) constitute an ATP-grasp 1 domain. Mg(2+) contacts are provided by Gln285, Glu299, and Asn301. Gln285, Glu299, and Asn301 together coordinate Mn(2+). An oligomerization domain region spans residues 403–551 (KRHMGFSWDG…YYYSCYADET (149 aa)). The tract at residues 552–962 (ELRKREREAV…AFAKSQLASY (411 aa)) is carbamoyl phosphate synthetic domain. One can recognise an ATP-grasp 2 domain in the interval 681-881 (GEVLRQEHLN…LAKAAARIMA (201 aa)). Residues Arg717, Lys765, Leu767, Glu772, Gly797, Val798, His799, Ser800, Gln840, and Glu852 each coordinate ATP. Mg(2+) contacts are provided by Gln840, Glu852, and Asn854. Mn(2+) contacts are provided by Gln840, Glu852, and Asn854. The segment at 963–1136 (EGGLPTNGNV…KEEGEEARAQ (174 aa)) is allosteric domain. Residues 964 to 1122 (GGLPTNGNVF…QEHSRELYEL (159 aa)) form the MGS-like domain.

Belongs to the CarB family. Composed of two chains; the small (or glutamine) chain promotes the hydrolysis of glutamine to ammonia, which is used by the large (or ammonia) chain to synthesize carbamoyl phosphate. Tetramer of heterodimers (alpha,beta)4. Mg(2+) is required as a cofactor. Requires Mn(2+) as cofactor.

The catalysed reaction is hydrogencarbonate + L-glutamine + 2 ATP + H2O = carbamoyl phosphate + L-glutamate + 2 ADP + phosphate + 2 H(+). It carries out the reaction hydrogencarbonate + NH4(+) + 2 ATP = carbamoyl phosphate + 2 ADP + phosphate + 2 H(+). The protein operates within amino-acid biosynthesis; L-arginine biosynthesis; carbamoyl phosphate from bicarbonate: step 1/1. Its pathway is pyrimidine metabolism; UMP biosynthesis via de novo pathway; (S)-dihydroorotate from bicarbonate: step 1/3. In terms of biological role, large subunit of the glutamine-dependent carbamoyl phosphate synthetase (CPSase). CPSase catalyzes the formation of carbamoyl phosphate from the ammonia moiety of glutamine, carbonate, and phosphate donated by ATP, constituting the first step of 2 biosynthetic pathways, one leading to arginine and/or urea and the other to pyrimidine nucleotides. The large subunit (synthetase) binds the substrates ammonia (free or transferred from glutamine from the small subunit), hydrogencarbonate and ATP and carries out an ATP-coupled ligase reaction, activating hydrogencarbonate by forming carboxy phosphate which reacts with ammonia to form carbamoyl phosphate. This is Carbamoyl phosphate synthase large chain from Bifidobacterium animalis subsp. lactis (strain AD011).